A 484-amino-acid polypeptide reads, in one-letter code: 6-phosphogluconate dehydrogenase, decarboxylating (484 aa).

NADP(+) is bound by residues 10-15 (GLAVMG), 33-35 (NRT), 75-77 (IKA), and Asn-103. Substrate-binding positions include Asn-103 and 129 to 131 (SGG). Residue Lys-183 is the Proton acceptor of the active site. 186–187 (HN) serves as a coordination point for substrate. The active-site Proton donor is the Glu-190. Residues Tyr-191, Lys-260, Arg-287, Arg-448, and His-454 each contribute to the substrate site.

This sequence belongs to the 6-phosphogluconate dehydrogenase family. In terms of assembly, homodimer.

It carries out the reaction 6-phospho-D-gluconate + NADP(+) = D-ribulose 5-phosphate + CO2 + NADPH. It functions in the pathway carbohydrate degradation; pentose phosphate pathway; D-ribulose 5-phosphate from D-glucose 6-phosphate (oxidative stage): step 3/3. Catalyzes the oxidative decarboxylation of 6-phosphogluconate to ribulose 5-phosphate and CO(2), with concomitant reduction of NADP to NADPH. In Caenorhabditis elegans, this protein is 6-phosphogluconate dehydrogenase, decarboxylating.